The primary structure comprises 369 residues: GTPase Obg (369 aa).

The 159-residue stretch at 1–159 (MKFVDEVTID…KNLKLELRVL (159 aa)) folds into the Obg domain. The 175-residue stretch at 160 to 334 (ADVGLLGMPN…LIHAIYSHVA (175 aa)) folds into the OBG-type G domain. GTP is bound by residues 166-173 (GMPNAGKS), 191-195 (FTTLH), 213-216 (DIPG), 284-287 (NKLD), and 315-317 (SAL). 2 residues coordinate Mg(2+): Ser173 and Thr193. Residues 339 to 369 (QPEEVPDPRFTTNEDLSEAAPAPDRDDPRFR) form a disordered region.

It belongs to the TRAFAC class OBG-HflX-like GTPase superfamily. OBG GTPase family. Monomer. Mg(2+) is required as a cofactor.

It localises to the cytoplasm. In terms of biological role, an essential GTPase which binds GTP, GDP and possibly (p)ppGpp with moderate affinity, with high nucleotide exchange rates and a fairly low GTP hydrolysis rate. Plays a role in control of the cell cycle, stress response, ribosome biogenesis and in those bacteria that undergo differentiation, in morphogenesis control. The protein is GTPase Obg of Leptothrix cholodnii (strain ATCC 51168 / LMG 8142 / SP-6) (Leptothrix discophora (strain SP-6)).